Consider the following 216-residue polypeptide: MELNKYIDHTLLKPTASEKDIIKICNEAKEYHFASVCVNPCNVSLVRKELKGSDVKVCSVISFPFGASSTEVKVEEAKKAIEAGAEEIDMVINVGKLLEGDLEYTQNEVSAITKACHEKNVLLKVIVETCYLEEKNIADICAIIEKAGADFIKTSTGYGSRGASVEDIKLFKKYLKKDTKIKASGGVRTREDAETYIGLGCSRIGASSGIAIVTGK.

The active-site Proton donor/acceptor is Asp89. Lys153 acts as the Schiff-base intermediate with acetaldehyde in catalysis. Residue Lys182 is the Proton donor/acceptor of the active site.

This sequence belongs to the DeoC/FbaB aldolase family. DeoC type 1 subfamily.

The protein localises to the cytoplasm. The catalysed reaction is 2-deoxy-D-ribose 5-phosphate = D-glyceraldehyde 3-phosphate + acetaldehyde. Its pathway is carbohydrate degradation; 2-deoxy-D-ribose 1-phosphate degradation; D-glyceraldehyde 3-phosphate and acetaldehyde from 2-deoxy-alpha-D-ribose 1-phosphate: step 2/2. Functionally, catalyzes a reversible aldol reaction between acetaldehyde and D-glyceraldehyde 3-phosphate to generate 2-deoxy-D-ribose 5-phosphate. In Treponema denticola (strain ATCC 35405 / DSM 14222 / CIP 103919 / JCM 8153 / KCTC 15104), this protein is Deoxyribose-phosphate aldolase.